Here is a 337-residue protein sequence, read N- to C-terminus: Glyceraldehyde-3-phosphate dehydrogenase (337 aa).

NAD(+)-binding positions include Arg12 to Ile13, Asp34, and Lys79. D-glyceraldehyde 3-phosphate-binding positions include Ser150–Thr152, Thr181, Thr210–Gly211, and Arg233. Residue Cys151 is the Nucleophile of the active site. NAD(+) is bound at residue Asn315.

Belongs to the glyceraldehyde-3-phosphate dehydrogenase family. Homotetramer. As to expression, expressed in all tissues examined.

The protein resides in the cytoplasm. It catalyses the reaction D-glyceraldehyde 3-phosphate + phosphate + NAD(+) = (2R)-3-phospho-glyceroyl phosphate + NADH + H(+). It participates in carbohydrate degradation; glycolysis; pyruvate from D-glyceraldehyde 3-phosphate: step 1/5. This chain is Glyceraldehyde-3-phosphate dehydrogenase (gpd), found in Lentinula edodes (Shiitake mushroom).